Consider the following 391-residue polypeptide: 3-ketoacyl-CoA thiolase (391 aa).

The Acyl-thioester intermediate role is filled by C90. Active-site proton acceptor residues include H347 and C377.

It belongs to the thiolase-like superfamily. Thiolase family.

The catalysed reaction is an acyl-CoA + acetyl-CoA = a 3-oxoacyl-CoA + CoA. It functions in the pathway lipid metabolism; fatty acid beta-oxidation. Involved in the degradation of long-chain fatty acids. The chain is 3-ketoacyl-CoA thiolase (fadA) from Bacillus subtilis (strain 168).